The primary structure comprises 575 residues: uncharacterized protein (575 aa).

Positions 507–536 (AHRKVGELNNKKPMTGEKPPPKNKKSPKYK) are disordered.

This is an uncharacterized protein from Ostreid herpesvirus 1 (isolate France) (OsHV-1).